The sequence spans 244 residues: 6-carboxyhexanoate--CoA ligase (244 aa).

Belongs to the BioW family. In terms of assembly, homodimer. Mg(2+) serves as cofactor.

The catalysed reaction is heptanedioate + ATP + CoA = 6-carboxyhexanoyl-CoA + AMP + diphosphate. The protein operates within metabolic intermediate metabolism; pimeloyl-CoA biosynthesis; pimeloyl-CoA from pimelate: step 1/1. Functionally, catalyzes the transformation of pimelate into pimeloyl-CoA with concomitant hydrolysis of ATP to AMP. The polypeptide is 6-carboxyhexanoate--CoA ligase (Methanococcus maripaludis (strain C7 / ATCC BAA-1331)).